The following is a 428-amino-acid chain: Gamma-glutamyl phosphate reductase (428 aa).

The protein belongs to the gamma-glutamyl phosphate reductase family.

The protein localises to the cytoplasm. It catalyses the reaction L-glutamate 5-semialdehyde + phosphate + NADP(+) = L-glutamyl 5-phosphate + NADPH + H(+). The protein operates within amino-acid biosynthesis; L-proline biosynthesis; L-glutamate 5-semialdehyde from L-glutamate: step 2/2. Its function is as follows. Catalyzes the NADPH-dependent reduction of L-glutamate 5-phosphate into L-glutamate 5-semialdehyde and phosphate. The product spontaneously undergoes cyclization to form 1-pyrroline-5-carboxylate. The polypeptide is Gamma-glutamyl phosphate reductase (Streptomyces avermitilis (strain ATCC 31267 / DSM 46492 / JCM 5070 / NBRC 14893 / NCIMB 12804 / NRRL 8165 / MA-4680)).